A 321-amino-acid polypeptide reads, in one-letter code: MNNTAHSMSEKVLLVASLEAARYGQYQQAVKGLQAESGLLETHMIDRITDLAYAPPADYFDAVYMMLPSEGVEWAAALPKLRASMIPGAKLRVSVVNENDPSSFLSQVRAELTIAGFTDIQTYENASIESRRPASSSVAEKDSTASSGMGAVKLRRKPNENGGHQQKKALLWATQPETHMDTEAKLQEHARTVSPASRREDCTVDFSAPRTRRKRACKGCTCGLRELEEEDERNSNLVQLDPSEVGGTGGKRTEVTTTVKGPNGEEHTVRRIQVDTRGATSSCGSCFLGDAFRCSSCPYLGLPAFEPGQKVEIPANMDDDL.

Positions 1–140 (MNNTAHSMSE…RRPASSSVAE (140 aa)) are N-terminal SAM-like domain. The span at 128 to 138 (IESRRPASSSV) shows a compositional bias: polar residues. Residues 128–166 (IESRRPASSSVAEKDSTASSGMGAVKLRRKPNENGGHQQ) are disordered. Positions 140-177 (EKDSTASSGMGAVKLRRKPNENGGHQQKKALLWATQPE) are linker. Positions 202, 217, 220, and 222 each coordinate [2Fe-2S] cluster. The segment at 202–222 (CTVDFSAPRTRRKRACKGCTC) is fe-S binding site A. The tract at residues 239–263 (QLDPSEVGGTGGKRTEVTTTVKGPN) is disordered. [4Fe-4S] cluster contacts are provided by Cys283, Cys286, Cys294, and Cys297. 2 consecutive short sequence motifs (cx2C motif) follow at residues 283–286 (CGSC) and 294–297 (CSSC). The tract at residues 283-297 (CGSCFLGDAFRCSSC) is fe-S binding site B.

Belongs to the anamorsin family. As to quaternary structure, monomer. Interacts with TAH18. Interacts with MIA40. [2Fe-2S] cluster serves as cofactor. The cofactor is [4Fe-4S] cluster.

It localises to the cytoplasm. It is found in the mitochondrion intermembrane space. Component of the cytosolic iron-sulfur (Fe-S) protein assembly (CIA) machinery required for the maturation of extramitochondrial Fe-S proteins. Part of an electron transfer chain functioning in an early step of cytosolic Fe-S biogenesis, facilitating the de novo assembly of a [4Fe-4S] cluster on the scaffold complex CFD1-NBP35. Electrons are transferred to DRE2 from NADPH via the FAD- and FMN-containing protein TAH18. TAH18-DRE2 are also required for the assembly of the diferric tyrosyl radical cofactor of ribonucleotide reductase (RNR), probably by providing electrons for reduction during radical cofactor maturation in the catalytic small subunit RNR2. The sequence is that of Fe-S cluster assembly protein DRE2 from Malassezia globosa (strain ATCC MYA-4612 / CBS 7966) (Dandruff-associated fungus).